A 275-amino-acid chain; its full sequence is Type III pantothenate kinase (275 aa).

9 to 16 provides a ligand contact to ATP; that stretch reads DIGNTRLK. Substrate contacts are provided by residues Y114 and 121 to 124; that span reads GVDR. D123 serves as the catalytic Proton acceptor. T147 serves as a coordination point for ATP. T209 provides a ligand contact to substrate.

It belongs to the type III pantothenate kinase family. As to quaternary structure, homodimer. It depends on NH4(+) as a cofactor. The cofactor is K(+).

It localises to the cytoplasm. The enzyme catalyses (R)-pantothenate + ATP = (R)-4'-phosphopantothenate + ADP + H(+). Its pathway is cofactor biosynthesis; coenzyme A biosynthesis; CoA from (R)-pantothenate: step 1/5. Catalyzes the phosphorylation of pantothenate (Pan), the first step in CoA biosynthesis. In Cupriavidus pinatubonensis (strain JMP 134 / LMG 1197) (Cupriavidus necator (strain JMP 134)), this protein is Type III pantothenate kinase.